Consider the following 100-residue polypeptide: Small cysteine and glycine repeat-containing protein 3 (100 aa).

The tract at residues 4–82 (CGCGSCGGCG…RRTCRSCGCG (79 aa)) is 13 X 2 AA repeats of CG.

This sequence belongs to the KRTAP type 28 family.

In terms of biological role, in the hair cortex, hair keratin intermediate filaments are embedded in an interfilamentous matrix, consisting of hair keratin-associated proteins (KRTAP), which are essential for the formation of a rigid and resistant hair shaft through their extensive disulfide bond cross-linking with abundant cysteine residues of hair keratins. The matrix proteins include the high-sulfur and high-glycine-tyrosine keratins. The protein is Small cysteine and glycine repeat-containing protein 3 of Homo sapiens (Human).